We begin with the raw amino-acid sequence, 164 residues long: Disulfide bond formation protein B (164 aa).

Over 1–9 (MTLPSARTC) the chain is Cytoplasmic. The chain crosses the membrane as a helical span at residues 10–26 (FLLGFLFCAALLAAALY). Residues 27-44 (FQFSGGLEPCPLCISQRI) are Periplasmic-facing. Cys-36 and Cys-39 form a disulfide bridge. A helical transmembrane segment spans residues 45–61 (MVLAVALVFLAAAIHHP). Over 62–68 (ASLGIRA) the chain is Cytoplasmic. The chain crosses the membrane as a helical span at residues 69–85 (YALLGTAVALGGASISG). The Periplasmic portion of the chain corresponds to 86–142 (RHVWLLHLPPEEVPECGPGLSYMFRNFPLGDTLKAMLSGTGDCAKVDWTFLGLSMPA). Cys-101 and Cys-128 are oxidised to a cystine. Residues 143-161 (WVLICFLGLGAFSLLQWWN) form a helical membrane-spanning segment. The Cytoplasmic portion of the chain corresponds to 162–164 (AER).

The protein belongs to the DsbB family.

It is found in the cell inner membrane. In terms of biological role, required for disulfide bond formation in some periplasmic proteins. Acts by oxidizing the DsbA protein. This chain is Disulfide bond formation protein B, found in Methylococcus capsulatus (strain ATCC 33009 / NCIMB 11132 / Bath).